The sequence spans 333 residues: Flotillin-like protein FloA (333 aa).

A helical transmembrane segment spans residues 10–30 (IFLIAGGIIFLVLFFHYVPFF).

The protein belongs to the flotillin-like FloA family. Homooligomerizes.

It localises to the cell membrane. The protein resides in the membrane raft. Its function is as follows. Found in functional membrane microdomains (FMM) that may be equivalent to eukaryotic membrane rafts. FMMs are highly dynamic and increase in number as cells age. Flotillins are thought to be important factors in membrane fluidity. This Bacteroides fragilis (strain ATCC 25285 / DSM 2151 / CCUG 4856 / JCM 11019 / LMG 10263 / NCTC 9343 / Onslow / VPI 2553 / EN-2) protein is Flotillin-like protein FloA.